We begin with the raw amino-acid sequence, 413 residues long: uncharacterized protein (413 aa).

Lysine 265 carries the post-translational modification N6-(pyridoxal phosphate)lysine.

The protein belongs to the threonine aldolase family. It depends on pyridoxal 5'-phosphate as a cofactor.

This is an uncharacterized protein from Caenorhabditis elegans.